Consider the following 391-residue polypeptide: Chorismate synthase (391 aa).

R48 contributes to the NADP(+) binding site. FMN is bound by residues 126 to 128 (RAS), G286, 301 to 305 (KPTSS), and R328.

Belongs to the chorismate synthase family. FMNH2 serves as cofactor.

It carries out the reaction 5-O-(1-carboxyvinyl)-3-phosphoshikimate = chorismate + phosphate. It functions in the pathway metabolic intermediate biosynthesis; chorismate biosynthesis; chorismate from D-erythrose 4-phosphate and phosphoenolpyruvate: step 7/7. In terms of biological role, catalyzes the anti-1,4-elimination of the C-3 phosphate and the C-6 proR hydrogen from 5-enolpyruvylshikimate-3-phosphate (EPSP) to yield chorismate, which is the branch point compound that serves as the starting substrate for the three terminal pathways of aromatic amino acid biosynthesis. This reaction introduces a second double bond into the aromatic ring system. The sequence is that of Chorismate synthase from Saccharolobus islandicus (strain L.S.2.15 / Lassen #1) (Sulfolobus islandicus).